The chain runs to 618 residues: V-type proton ATPase catalytic subunit A (618 aa).

Position 251-258 (251-258) interacts with ATP; the sequence is GAFGCGKT.

It belongs to the ATPase alpha/beta chains family. As to quaternary structure, V-ATPase is a heteromultimeric enzyme composed of a peripheral catalytic V1 complex (main components: subunits A, B, C, D, E, and F) attached to an integral membrane V0 proton pore complex (main component: the proteolipid protein).

It catalyses the reaction ATP + H2O + 4 H(+)(in) = ADP + phosphate + 5 H(+)(out). Its function is as follows. Catalytic subunit of the peripheral V1 complex of vacuolar ATPase. V-ATPase vacuolar ATPase is responsible for acidifying a variety of intracellular compartments in eukaryotic cells. The protein is V-type proton ATPase catalytic subunit A (vatA) of Dictyostelium discoideum (Social amoeba).